The sequence spans 610 residues: UvrABC system protein C (610 aa).

Residues 13–91 (HLPGVYRMYD…IKENQPKYNV (79 aa)) form the GIY-YIG domain. In terms of domain architecture, UVR spans 201–236 (GQVIEHLVQKMENAAQELDFEAAARFRDQIQSVRAV).

Belongs to the UvrC family. In terms of assembly, interacts with UvrB in an incision complex.

The protein localises to the cytoplasm. Its function is as follows. The UvrABC repair system catalyzes the recognition and processing of DNA lesions. UvrC both incises the 5' and 3' sides of the lesion. The N-terminal half is responsible for the 3' incision and the C-terminal half is responsible for the 5' incision. The sequence is that of UvrABC system protein C from Actinobacillus pleuropneumoniae serotype 3 (strain JL03).